The sequence spans 353 residues: MVRILAIETSCDETAAAVVRDRAIESNVIASQVCAHQPFGGVVPEVASRAHLENINGVITAAISEAGCDWSAIDAIAVTCAPGLVGSLLIGVTAAKTLALVHQKPLLGIHHLEGHLYASYLAEPTLEPPFLCLLVSGGHTSLIGVYGCGEYQLFGQTRDDAAGEAYDKVARLMGLGYPGGPLLDRWAQQGNPEAFDLPEGNIRLPDGKVHPYDASFSGLKTAVARLVAELRQTHPELPVADLAASFQKAVAQALTKRAIAAAVDHGFKTLAIGGGVAANSGLRQHLTAAAEPLGLRLIFPPLRLCTDNAAMIGCAAADHFQRGDRSPLDLTARSRLSLLEISALYGPTPLAVS.

Fe cation-binding residues include H111 and H115. Residues 134-138 (LVSGG), D167, G180, D184, and N279 contribute to the substrate site. D307 is a binding site for Fe cation.

The protein belongs to the KAE1 / TsaD family. Requires Fe(2+) as cofactor.

It localises to the cytoplasm. It carries out the reaction L-threonylcarbamoyladenylate + adenosine(37) in tRNA = N(6)-L-threonylcarbamoyladenosine(37) in tRNA + AMP + H(+). Required for the formation of a threonylcarbamoyl group on adenosine at position 37 (t(6)A37) in tRNAs that read codons beginning with adenine. Is involved in the transfer of the threonylcarbamoyl moiety of threonylcarbamoyl-AMP (TC-AMP) to the N6 group of A37, together with TsaE and TsaB. TsaD likely plays a direct catalytic role in this reaction. The polypeptide is tRNA N6-adenosine threonylcarbamoyltransferase (Thermosynechococcus vestitus (strain NIES-2133 / IAM M-273 / BP-1)).